A 187-amino-acid polypeptide reads, in one-letter code: Large ribosomal subunit protein eL18A (187 aa).

S16 and S64 each carry phosphoserine. Phosphothreonine occurs at positions 87, 89, and 134. Residue S136 is modified to Phosphoserine. T138 carries the post-translational modification Phosphothreonine.

The protein belongs to the eukaryotic ribosomal protein eL18 family. As to quaternary structure, component of the large ribosomal subunit (LSU). Mature yeast ribosomes consist of a small (40S) and a large (60S) subunit. The 40S small subunit contains 1 molecule of ribosomal RNA (18S rRNA) and at least 33 different proteins. The large 60S subunit contains 3 rRNA molecules (25S, 5.8S and 5S rRNA) and at least 46 different proteins. eL18 interacts with NAP1.

It localises to the cytoplasm. Its function is as follows. Component of the ribosome, a large ribonucleoprotein complex responsible for the synthesis of proteins in the cell. The small ribosomal subunit (SSU) binds messenger RNAs (mRNAs) and translates the encoded message by selecting cognate aminoacyl-transfer RNA (tRNA) molecules. The large subunit (LSU) contains the ribosomal catalytic site termed the peptidyl transferase center (PTC), which catalyzes the formation of peptide bonds, thereby polymerizing the amino acids delivered by tRNAs into a polypeptide chain. The nascent polypeptides leave the ribosome through a tunnel in the LSU and interact with protein factors that function in enzymatic processing, targeting, and the membrane insertion of nascent chains at the exit of the ribosomal tunnel. The polypeptide is Large ribosomal subunit protein eL18A (rpl1801) (Schizosaccharomyces pombe (strain 972 / ATCC 24843) (Fission yeast)).